A 344-amino-acid polypeptide reads, in one-letter code: Protein POLAR LOCALIZATION DURING ASYMMETRIC DIVISION AND REDISTRIBUTION (344 aa).

T19 is subject to Phosphothreonine; by ASK7. A Phosphoserine; by ASK7 modification is found at S79. Phosphothreonine; by ASK7 occurs at positions 84 and 86. Residues S91 and S94 each carry the phosphoserine; by ASK7 modification. 3 positions are modified to phosphothreonine; by ASK7: T193, T217, and T233. S235 is subject to Phosphoserine; by ASK7. Residues L262–A297 are a coiled coil. A phosphoserine; by ASK7 mark is found at S308, S309, S320, S321, and S336.

In terms of assembly, component of a complex made of POLAR, BASL, ASK7/BIN2 and ASK3/SK12. Interacts with BASL, ASK7/BIN2 and ASK3/SK12. Post-translationally, phosphorylation by ASK7/BIN2 is increases turnover. As to expression, expressed in stomatal lineage cells with asymmetric division potential.

Its subcellular location is the cytoplasm. It is found in the cell cortex. In terms of biological role, regulates asymmetric cell division (ACD), especially in stomatal-lineage cells. Acts as a stomatal lineage scaffold which regulates subcellular localization and transient polarization of kinases (e.g. ASK7/BIN2 and ASK3/SK12) involved in ACD in a BASL-dependent manner. Promotes the differentiation of both pavement cells and stomata. This is Protein POLAR LOCALIZATION DURING ASYMMETRIC DIVISION AND REDISTRIBUTION from Arabidopsis thaliana (Mouse-ear cress).